We begin with the raw amino-acid sequence, 275 residues long: NH(3)-dependent NAD(+) synthetase (275 aa).

Residue 46–53 (GISGGQDS) participates in ATP binding. Aspartate 52 provides a ligand contact to Mg(2+). Deamido-NAD(+) is bound at residue arginine 140. Residue threonine 160 participates in ATP binding. Glutamate 165 is a Mg(2+) binding site. Residues lysine 173 and aspartate 180 each coordinate deamido-NAD(+). The ATP site is built by lysine 189 and threonine 211. A deamido-NAD(+)-binding site is contributed by 260–261 (HK).

This sequence belongs to the NAD synthetase family. Homodimer.

The enzyme catalyses deamido-NAD(+) + NH4(+) + ATP = AMP + diphosphate + NAD(+) + H(+). Its pathway is cofactor biosynthesis; NAD(+) biosynthesis; NAD(+) from deamido-NAD(+) (ammonia route): step 1/1. Functionally, catalyzes the ATP-dependent amidation of deamido-NAD to form NAD. Uses ammonia as a nitrogen source. This is NH(3)-dependent NAD(+) synthetase from Salmonella dublin (strain CT_02021853).